The primary structure comprises 490 residues: Cobyric acid synthase (490 aa).

Positions 252–439 (RLKVVVPVLP…LHGLFESTAA (188 aa)) constitute a GATase cobBQ-type domain. C333 functions as the Nucleophile in the catalytic mechanism. H431 is a catalytic residue.

Belongs to the CobB/CobQ family. CobQ subfamily.

Its pathway is cofactor biosynthesis; adenosylcobalamin biosynthesis. In terms of biological role, catalyzes amidations at positions B, D, E, and G on adenosylcobyrinic A,C-diamide. NH(2) groups are provided by glutamine, and one molecule of ATP is hydrogenolyzed for each amidation. The chain is Cobyric acid synthase from Pseudomonas aeruginosa (strain UCBPP-PA14).